Reading from the N-terminus, the 130-residue chain is Peptide methionine sulfoxide reductase MsrB (130 aa).

Residues 1–122 (MKKREDMTEM…NSVSMAFEDS (122 aa)) enclose the MsrB domain. Residues cysteine 39, cysteine 42, cysteine 88, and cysteine 91 each coordinate Zn(2+). Catalysis depends on cysteine 111, which acts as the Nucleophile.

The protein belongs to the MsrB Met sulfoxide reductase family. The cofactor is Zn(2+).

It catalyses the reaction L-methionyl-[protein] + [thioredoxin]-disulfide + H2O = L-methionyl-(R)-S-oxide-[protein] + [thioredoxin]-dithiol. This is Peptide methionine sulfoxide reductase MsrB from Pasteurella multocida (strain Pm70).